The chain runs to 525 residues: GMP synthase [glutamine-hydrolyzing] (525 aa).

The 199-residue stretch at 9 to 207 (RILILDFGSQ…VLDICQCEAL (199 aa)) folds into the Glutamine amidotransferase type-1 domain. C86 functions as the Nucleophile in the catalytic mechanism. Residues H181 and E183 contribute to the active site. Positions 208–400 (WTPATIIEDA…LGLPYDMLFR (193 aa)) constitute a GMPS ATP-PPase domain. ATP is bound at residue 235-241 (SGGVDSS).

Homodimer.

It carries out the reaction XMP + L-glutamine + ATP + H2O = GMP + L-glutamate + AMP + diphosphate + 2 H(+). Its pathway is purine metabolism; GMP biosynthesis; GMP from XMP (L-Gln route): step 1/1. Its function is as follows. Catalyzes the synthesis of GMP from XMP. This is GMP synthase [glutamine-hydrolyzing] from Serratia proteamaculans (strain 568).